A 61-amino-acid chain; its full sequence is Beta-insect depressant toxin BmKIT2 (61 aa).

The LCN-type CS-alpha/beta domain occupies 1 to 61 (DGYIKGKSGC…TWKSESNTCG (61 aa)). 4 cysteine pairs are disulfide-bonded: Cys10/Cys60, Cys14/Cys35, Cys21/Cys42, and Cys25/Cys44. A Glycine amide modification is found at Gly61.

Belongs to the long (4 C-C) scorpion toxin superfamily. Sodium channel inhibitor family. Beta subfamily. Expressed by the venom gland.

It is found in the secreted. Functionally, on insects, this depressant beta-toxins cause a transient contraction paralysis followed by a slow flaccid paralysis. They bind voltage-independently at site-4 of sodium channels (Nav) and shift the voltage of activation toward more negative potentials thereby affecting sodium channel activation and promoting spontaneous and repetitive firing. This toxin is active against insects and mammals. It is capable of binding to not only cockroach neuronal membranes, but also rat cerebrocortical and hippocampal synaptosomes. This toxin also has potent peripheral and central suppressive effects on rat nociceptive spontaneous responses, thermal hyperalgesia and spinal c-Fos expression induced by formalin and carrageenan, which may be derived from its modulation on the activity of sodium channels of the neurons. Administration of BmKIT2 into rat brain can also suppress the epileptic seizures significantly. The protein is Beta-insect depressant toxin BmKIT2 of Olivierus martensii (Manchurian scorpion).